Reading from the N-terminus, the 444-residue chain is DNA primase DnaG (444 aa).

The region spanning 173-250 (DAILIVEGRS…YVTRAPRGLE (78 aa)) is the Toprim domain. Residues Glu179, Asp221, and Asp223 each coordinate Mg(2+). Positions 302-354 (VTSSVNKTDKYSQKNESKQFKQQKNENKQVKDNSKEKTQKSTEKHNETEETHL) are disordered. Over residues 308–354 (KTDKYSQKNESKQFKQQKNENKQVKDNSKEKTQKSTEKHNETEETHL) the composition is skewed to basic and acidic residues.

It belongs to the archaeal DnaG primase family. Forms a ternary complex with MCM helicase and DNA. Component of the archaeal exosome complex. It depends on Mg(2+) as a cofactor.

The catalysed reaction is ssDNA + n NTP = ssDNA/pppN(pN)n-1 hybrid + (n-1) diphosphate.. Its function is as follows. RNA polymerase that catalyzes the synthesis of short RNA molecules used as primers for DNA polymerase during DNA replication. Also part of the exosome, which is a complex involved in RNA degradation. Acts as a poly(A)-binding protein that enhances the interaction between heteromeric, adenine-rich transcripts and the exosome. In Methanosphaera stadtmanae (strain ATCC 43021 / DSM 3091 / JCM 11832 / MCB-3), this protein is DNA primase DnaG.